A 140-amino-acid polypeptide reads, in one-letter code: Fatty acid-binding protein 12 (140 aa).

A fatty acid-binding positions include arginine 107 and arginine 127–tyrosine 129.

Belongs to the calycin superfamily. Fatty-acid binding protein (FABP) family. Expressed in a number of retinoblastoma cell lines.

In terms of biological role, may play a role in lipid transport. The protein is Fatty acid-binding protein 12 (FABP12) of Homo sapiens (Human).